Consider the following 222-residue polypeptide: Flagellin B5 (222 aa).

Residues 1–4 (MRRG) constitute a propeptide that is removed on maturation.

This sequence belongs to the archaeal flagellin family.

Its subcellular location is the archaeal flagellum. Its function is as follows. Flagellin is the subunit protein which polymerizes to form the filaments of archaeal flagella. The polypeptide is Flagellin B5 (flaB5) (Pyrococcus abyssi (strain GE5 / Orsay)).